Here is a 429-residue protein sequence, read N- to C-terminus: Putative chloride channel protein ClcB-like (429 aa).

11 helical membrane passes run M1–E21, L44–L64, L146–G166, V168–V188, F200–V220, L221–I241, L259–N279, V283–C303, G315–Y335, A354–I376, and Y383–A405.

Belongs to the chloride channel (TC 2.A.49) family. ClcB subfamily.

It localises to the cell inner membrane. The chain is Putative chloride channel protein ClcB-like from Ralstonia nicotianae (strain ATCC BAA-1114 / GMI1000) (Ralstonia solanacearum).